Consider the following 127-residue polypeptide: Fatty acid-binding protein, liver (127 aa).

Position 1 is an N-acetylmethionine (Met-1). Residues Lys-31 and Lys-36 each carry the N6-succinyllysine modification. Ser-39 carries the phosphoserine modification. Lys-46 bears the N6-succinyllysine mark. Ser-56 is subject to Phosphoserine. Residues Lys-57, Lys-78, and Lys-90 each carry the N6-succinyllysine modification. Ser-100 is subject to Phosphoserine. A Deamidated asparagine; alternate modification is found at Asn-105. Positions 105 to 106 (NG) form a cross-link, isoaspartyl glycine isopeptide (Asn-Gly); alternate. The residue at position 121 (Lys-121) is an N6-succinyllysine.

It belongs to the calycin superfamily. Fatty-acid binding protein (FABP) family. As to quaternary structure, monomer. Deamidation and transpeptidation at the beta carboxyl of Asn-105 forms an isoaspartyl residue and Edman degradation appears as though blocked. This rearrangement gives rise to an extra negative charge carried by the acid form.

The protein resides in the cytoplasm. Functionally, plays a role in lipoprotein-mediated cholesterol uptake in hepatocytes. Binds cholesterol. Binds free fatty acids and their coenzyme A derivatives, bilirubin, and some other small molecules in the cytoplasm. May be involved in intracellular lipid transport. This chain is Fatty acid-binding protein, liver (FABP1), found in Bos taurus (Bovine).